Reading from the N-terminus, the 539-residue chain is MFCFQCQEAAKNEGCTIKGVCGKDDVVANLQDLLIYTIKGLCYVCDKGNYLDDEVMDYIPKALFVTITNVNFDDKDVINWIKKGVALREKIIEKNNLNKEELPYCATWAYETDEDLINLANTKEVSVLAEDNEDIRSLKELITYGIKGIGAYLSHAMHLGYNNEDIHKFIIKAFTKIVDSKDADELFNLAMETGKYAVETLALLDKANTETYGHPEITEVNLGVRDRPGILISGHDLKDLEQLLEQSKDAGVDIYTHCEMLPAHYYPFFKKYEHFVGNYGGSWPFQREEFEKFNGPIVMTTNCLVPPKDSYKDRVYVTNEVGYPGLKRIPVKEDGTKDFSEVIEHAKKCKPPTPLENGKIVGGFAHNQVLALADKVIEAVKSGKIRKFVVMAGCDGRHKTREYYTEFAKKLPKDTVILTCGCAKYRFIKLDLGDIDGIPRVLDAGQCNDSYSLVKIALALKDAFGLNDVNELPIAYNISWYEQKAVTVLLALLYLGVKNIVLGPTLPAFLSPNVTKVLVEKFGISTISTVDEDIKRLVG.

Positions 3, 6, 15, and 21 each coordinate [4Fe-4S] cluster. 8 residues coordinate hybrid [4Fe-2O-2S] cluster: H235, E259, C303, C394, C422, C447, E482, and K484. C394 bears the Cysteine persulfide mark.

It belongs to the HCP family. [4Fe-4S] cluster serves as cofactor. Hybrid [4Fe-2O-2S] cluster is required as a cofactor.

Its subcellular location is the cytoplasm. The catalysed reaction is A + NH4(+) + H2O = hydroxylamine + AH2 + H(+). In terms of biological role, catalyzes the reduction of hydroxylamine to form NH(3) and H(2)O. The polypeptide is Hydroxylamine reductase (Methanocaldococcus jannaschii (strain ATCC 43067 / DSM 2661 / JAL-1 / JCM 10045 / NBRC 100440) (Methanococcus jannaschii)).